The primary structure comprises 292 residues: Cyclic dipurine nucleotide synthase (292 aa).

Gln-47 contacts ATP. 48-52 (GSYRN) is a binding site for GTP. Positions 61 and 63 each coordinate Mg(2+). ATP-binding positions include Asp-63, 121–122 (NK), and Asp-136. Asp-136 is a binding site for Mg(2+). Positions 197 and 216 each coordinate GTP.

It belongs to the CD-NTase family. E01 subfamily. Requires Mg(2+) as cofactor.

The enzyme catalyses 2 ATP = 3',3'-c-di-AMP + 2 diphosphate. It carries out the reaction 2 GTP = 3',3'-c-di-GMP + 2 diphosphate. The catalysed reaction is GTP + ATP = 3',3'-cGAMP + 2 diphosphate. Functionally, cyclic nucleotide synthase (second messenger synthase) of a CBASS antivirus system. CBASS (cyclic oligonucleotide-based antiphage signaling system) provides immunity against bacteriophage. The CD-NTase protein synthesizes cyclic nucleotides in response to infection; these serve as specific second messenger signals. The signals activate a diverse range of effectors, leading to bacterial cell death and thus abortive phage infection. A type I-A(GA) CBASS system. In terms of biological role, cyclic dinucleotide synthase that catalyzes the synthesis of 3'3'-cyclic GMP-AMP (cGAMP) from GTP and ATP, and of c-di-AMP and c-di-GMP, that are second messengers for cell signal transduction. The chain is Cyclic dipurine nucleotide synthase from Elizabethkingia meningoseptica (Chryseobacterium meningosepticum).